A 212-amino-acid chain; its full sequence is Small ribosomal subunit protein uS5 (212 aa).

One can recognise an S5 DRBM domain in the interval 48 to 111 (LDDEVLDINM…EVAKLNIIDV (64 aa)).

Belongs to the universal ribosomal protein uS5 family. Part of the 30S ribosomal subunit. Contacts protein S4.

Functionally, with S4 and S12 plays an important role in translational accuracy. This chain is Small ribosomal subunit protein uS5, found in Halobacterium salinarum (strain ATCC 700922 / JCM 11081 / NRC-1) (Halobacterium halobium).